We begin with the raw amino-acid sequence, 199 residues long: Transgelin-3 (199 aa).

One can recognise a Calponin-homology (CH) domain in the interval 24-136; sequence ADLENKLVDW…RTLMALGSVA (113 aa). Phosphoserine is present on Ser-163. A Calponin-like repeat occupies 174–199; the sequence is IGLQMGSNKGASQAGMTGYGMPRQIM. A compositionally biased stretch (polar residues) spans 176–188; that stretch reads LQMGSNKGASQAG. A disordered region spans residues 176 to 199; the sequence is LQMGSNKGASQAGMTGYGMPRQIM.

Belongs to the calponin family. Widely expressed in the brain. Expression is increased in the superior frontal cortex of alcoholics, but not in the motor cortex or cerebellum.

This is Transgelin-3 (TAGLN3) from Homo sapiens (Human).